The following is a 298-amino-acid chain: Small ribosomal subunit protein uS3 (298 aa).

Residues valine 39–arginine 107 form the KH type-2 domain. Residues proline 214–glutamate 298 form a disordered region. Positions alanine 219–alanine 245 are enriched in basic and acidic residues. A compositionally biased stretch (low complexity) spans lysine 277–glutamate 298.

Belongs to the universal ribosomal protein uS3 family. As to quaternary structure, part of the 30S ribosomal subunit. Forms a tight complex with proteins S10 and S14.

Functionally, binds the lower part of the 30S subunit head. Binds mRNA in the 70S ribosome, positioning it for translation. In Albidiferax ferrireducens (strain ATCC BAA-621 / DSM 15236 / T118) (Rhodoferax ferrireducens), this protein is Small ribosomal subunit protein uS3.